Reading from the N-terminus, the 58-residue chain is Small ribosomal subunit protein bS21 (58 aa).

The interval 34–58 (KREHYESPSVRRKKKSEAARRRKRR) is disordered. Residues 43–58 (VRRKKKSEAARRRKRR) are compositionally biased toward basic residues.

It belongs to the bacterial ribosomal protein bS21 family.

This Caldicellulosiruptor bescii (strain ATCC BAA-1888 / DSM 6725 / KCTC 15123 / Z-1320) (Anaerocellum thermophilum) protein is Small ribosomal subunit protein bS21.